The sequence spans 513 residues: Aspartyl protease family protein 1 (513 aa).

The first 21 residues, 1-21, serve as a signal peptide directing secretion; that stretch reads MVWYSSCRILFLGLLILLASS. Positions 104 to 445 constitute a Peptidase A1 domain; sequence HYANVTVGTP…DREKLILGWK (342 aa). Residues Asp122 and Asp327 contribute to the active site. A disordered region spans residues 452 to 488; sequence GETSARTLPSNRSSSSARPPASSFDPEATNIPSQRPN. The segment covering 455 to 474 has biased composition (low complexity); it reads SARTLPSNRSSSSARPPASS. Ser484 carries the GPI-anchor amidated serine lipid modification. The propeptide at 485–513 is removed in mature form; the sequence is QRPNTSTTSAAYSLSISLSLFFFSILAIL.

It belongs to the peptidase A1 family.

The protein localises to the cell membrane. In terms of biological role, aspartyl protease. Not able to cleave BAG6. In Arabidopsis thaliana (Mouse-ear cress), this protein is Aspartyl protease family protein 1.